Reading from the N-terminus, the 387-residue chain is Anhydro-N-acetylmuramic acid kinase (387 aa).

17-24 lines the ATP pocket; sequence GTSMDGVD.

Belongs to the anhydro-N-acetylmuramic acid kinase family.

It catalyses the reaction 1,6-anhydro-N-acetyl-beta-muramate + ATP + H2O = N-acetyl-D-muramate 6-phosphate + ADP + H(+). The protein operates within amino-sugar metabolism; 1,6-anhydro-N-acetylmuramate degradation. Its pathway is cell wall biogenesis; peptidoglycan recycling. Catalyzes the specific phosphorylation of 1,6-anhydro-N-acetylmuramic acid (anhMurNAc) with the simultaneous cleavage of the 1,6-anhydro ring, generating MurNAc-6-P. Is required for the utilization of anhMurNAc either imported from the medium or derived from its own cell wall murein, and thus plays a role in cell wall recycling. This Burkholderia pseudomallei (strain 1710b) protein is Anhydro-N-acetylmuramic acid kinase.